A 231-amino-acid polypeptide reads, in one-letter code: TATA-box-binding protein (231 aa).

2 repeat units span residues 58–134 (LQNI…ARII) and 148–225 (IQNI…YPVL).

Belongs to the TBP family. Belongs to the TFIID complex together with the TBP-associated factors (TAFs). Binds DNA as monomer.

Its subcellular location is the nucleus. General transcription factor that functions at the core of the DNA-binding multiprotein factor TFIID. Binding of TFIID to the TATA box is the initial transcriptional step of the pre-initiation complex (PIC), playing a role in the activation of eukaryotic genes transcribed by RNA polymerase II. This chain is TATA-box-binding protein (tbp1), found in Schizosaccharomyces pombe (strain 972 / ATCC 24843) (Fission yeast).